The following is a 24-amino-acid chain: Lycosin-I (24 aa).

It belongs to the cationic peptide 04 (cupiennin) family. 05 subfamily. As to quaternary structure, monomer in solution. Small size oligomers on the lipid membranes.

It is found in the secreted. Its subcellular location is the target cell membrane. Its function is as follows. Antimicrobial peptide that inhibits many reference strains of bacteria and fungi. Is potent against Candida species and multidrug-resistant Acinetobacter baumannii (MDRAB). Is probably localized in the cytoplasm after being transported through the cell wall and membrane. Is able to interact with cell membranes and enter into cell plasma to activate the mitochondrial death pathway to sensitize cancer cells for apoptosis, as well as up-regulates p27 to inhibit cell proliferation. It shows very low effect on normal cells, such as erythrocytes, Hek293t cells. It also potently inhibits tumor cell growth in vitro, and suppresses various tumor growth in vivo when tested in human cancer xenograft models. It interacts with the cell membrane and is then internalized into the cytoplasm of cancer cells to initiate the programmable cell death. In addition, this peptide has the therapeutic effects of anti-hypertension by endothelium-dependent vasodilatation via the NO/sGC/cGMP signaling pathway. In vivo, this peptide also shows a significant ability to inhibit T.gondii invasion and proliferation, making it a potential alternative agent for the treatment of toxoplasmosis. The sequence is that of Lycosin-I from Lycosa singoriensis (Wolf spider).